An 89-amino-acid chain; its full sequence is Luqin-like RYamide peptides lury-1 (89 aa).

The N-terminal stretch at methionine 1–cysteine 19 is a signal peptide. A propeptide spanning residues glutamine 20–glutamate 26 is cleaved from the precursor. Tyrosine amide occurs at positions 35 and 43. Residues serine 47–leucine 89 constitute a propeptide that is removed on maturation.

In terms of tissue distribution, expressed in the M1 and M2 pharyngeal neurons from where the LURY-1-1 and LURY-1-2 peptides are secreted.

Its subcellular location is the secreted. Its function is as follows. Acts as a ligand for the npr-22 receptor and controls food-related processes including feeding, lifespan, egg-laying and roaming behavior. Secreted in the presence of food, leading to reduced feeding and roaming behavior and increased egg laying and lifespan. Activity may be latent under normal conditions but induced under conditions that cause hyperactivation of the pharynx such as abrupt refeeding after starvation. The chain is Luqin-like RYamide peptides lury-1 from Caenorhabditis elegans.